The primary structure comprises 897 residues: uncharacterized protein (897 aa).

2 disordered regions span residues 25–89 (RLQD…TRKR) and 106–168 (PTRL…TPPS). Composition is skewed to low complexity over residues 32-44 (SSSP…SSSS), 57-68 (SLQNSQSSSYSL), and 106-142 (PTRL…SSVS). The Helicase ATP-binding domain occupies 263 to 446 (SMEQSSKCGG…YSLLKFLRIK (184 aa)). 276–283 (DDMGLGKT) provides a ligand contact to ATP. A DEAH box motif is present at residues 397–400 (DEAH). The segment at 606–655 (CSVCLDPCLAPVFIIPCGHFTCQECMSMLVGQKYGSSSTSTIIAKCPMCR) adopts an RING-type zinc-finger fold. Residues 727-890 (QARQTILDII…LSRLDKEELL (164 aa)) form the Helicase C-terminal domain.

Belongs to the SNF2/RAD54 helicase family.

The protein localises to the cytoplasm. The protein resides in the nucleus. This is an uncharacterized protein from Schizosaccharomyces pombe (strain 972 / ATCC 24843) (Fission yeast).